Here is a 1196-residue protein sequence, read N- to C-terminus: DNA-directed RNA polymerase subunit 2 (1196 aa).

Positions 1074–1095 are disordered; that stretch reads SRARGPTQLLTRQAPEGRSRDG. The segment at 1133 to 1154 adopts a C4-type zinc-finger fold; sequence CDSCGQFAHKVPEKKYYTCTGC.

Belongs to the RNA polymerase beta chain family.

The protein localises to the virion. It carries out the reaction RNA(n) + a ribonucleoside 5'-triphosphate = RNA(n+1) + diphosphate. Functionally, DNA-dependent RNA polymerase catalyzes the transcription of DNA into RNA using the four ribonucleoside triphosphates as substrates. The sequence is that of DNA-directed RNA polymerase subunit 2 (RPO2) from Acanthamoeba polyphaga mimivirus (APMV).